Reading from the N-terminus, the 704-residue chain is DNA ligase (704 aa).

NAD(+) contacts are provided by residues 43 to 47 (DADYD), 92 to 93 (SL), and Glu124. Lys126 serves as the catalytic N6-AMP-lysine intermediate. The NAD(+) site is built by Arg147, Glu182, Lys298, and Lys322. Zn(2+) contacts are provided by Cys427, Cys430, Cys445, and Cys451. Residues 625–704 (PVASPVAGKI…DGWLRLIGDA (80 aa)) form the BRCT domain.

The protein belongs to the NAD-dependent DNA ligase family. LigA subfamily. The cofactor is Mg(2+). It depends on Mn(2+) as a cofactor.

It carries out the reaction NAD(+) + (deoxyribonucleotide)n-3'-hydroxyl + 5'-phospho-(deoxyribonucleotide)m = (deoxyribonucleotide)n+m + AMP + beta-nicotinamide D-nucleotide.. Its function is as follows. DNA ligase that catalyzes the formation of phosphodiester linkages between 5'-phosphoryl and 3'-hydroxyl groups in double-stranded DNA using NAD as a coenzyme and as the energy source for the reaction. It is essential for DNA replication and repair of damaged DNA. This is DNA ligase from Cereibacter sphaeroides (strain ATCC 17023 / DSM 158 / JCM 6121 / CCUG 31486 / LMG 2827 / NBRC 12203 / NCIMB 8253 / ATH 2.4.1.) (Rhodobacter sphaeroides).